A 767-amino-acid chain; its full sequence is General transcription and DNA repair factor IIH helicase/translocase subunit XPB1 (767 aa).

The interval Met-1–Asp-51 is disordered. Residues Asp-31–Arg-41 show a composition bias toward acidic residues. The segment covering Asp-42–Asp-51 has biased composition (basic and acidic residues). One can recognise a Helicase ATP-binding domain in the interval Met-293 to Leu-455. Leu-306–Ser-313 is an ATP binding site. A DEVH box motif is present at residues Asp-408–His-411. The 167-residue stretch at Arg-510 to Ser-676 folds into the Helicase C-terminal domain. Residues Arg-742–Val-767 are disordered. Positions Lys-750–Tyr-766 match the Nuclear localization signal motif. The segment covering Arg-758–Val-767 has biased composition (basic residues).

This sequence belongs to the helicase family. RAD25/XPB subfamily. As to quaternary structure, component of the 7-subunit TFIIH core complex composed of XPB, XPD, TFB1/GTF2H1, GTF2H2/P44, TFB4/GTF2H3, TFB2/GTF2H4 and TFB5/GTF2H5, which is active in NER. The core complex associates with the 3-subunit CDK-activating kinase (CAK) module composed of CYCH1/cyclin H1, CDKD and MAT1/At4g30820 to form the 10-subunit holoenzyme (holo-TFIIH) active in transcription. In terms of tissue distribution, expressed ubiquitously.

The protein localises to the nucleus. It catalyses the reaction Couples ATP hydrolysis with the unwinding of duplex DNA by translocating in the 3'-5' direction.. The enzyme catalyses ATP + H2O = ADP + phosphate + H(+). Its function is as follows. ATP-dependent 3'-5' DNA helicase/translocase; binds dsDNA rather than ssDNA, unzipping it in a translocase rather than classical helicase activity. Component of the general transcription and DNA repair factor IIH (TFIIH) core complex. When complexed to CDK-activating kinase (CAK), involved in RNA transcription by RNA polymerase II. The ATPase activity of XPB/ERCC3, but not its helicase activity, is required for DNA opening; it may wrap around the damaged DNA wedging it open, causing localized melting and twisting that allows XPD/ERCC2 helicase to anchor. The ATP-dependent helicase activity of XPB/ERCC3 may be required for promoter escape. Also involved in transcription-coupled nucleotide excision repair (NER) of damaged DNA. In NER, TFIIH acts by opening DNA around the lesion to allow the excision of the damaged oligonucleotide and its replacement by a new DNA fragment. The structure of the TFIIH transcription complex differs from the NER-TFIIH complex. Partially complements UV sensitivity of a yeast SSL2 mutation. Required during the early stages of development, including seed germination. The protein is General transcription and DNA repair factor IIH helicase/translocase subunit XPB1 (XPB1) of Arabidopsis thaliana (Mouse-ear cress).